We begin with the raw amino-acid sequence, 421 residues long: Exoskeleton protein RP43 (421 aa).

The N-terminal stretch at Met1 to Cys24 is a signal peptide. Intrachain disulfides connect Cys72-Cys104, Cys132-Cys154, Cys193-Cys219, Cys247-Cys269, Cys309-Cys335, and Cys362-Cys384. CUB domains follow at residues Cys72–Val191, Cys193–Pro306, and Cys309–Gly421.

As to expression, detected in vestimentum and trunk but not in opisthosome or obturaculum. In the vestimentum, expression is restricted to epithelial cells under apical cuticular plaques.

In terms of biological role, may play a role in protein-protein interactions during tube assembly. The protein is Exoskeleton protein RP43 of Riftia pachyptila (Vent tube worm).